We begin with the raw amino-acid sequence, 1934 residues long: Myosin-7 (1934 aa).

Positions aspartate 31–proline 80 constitute a Myosin N-terminal SH3-like domain. The region spanning aspartate 84 to aspartate 777 is the Myosin motor domain. At lysine 128 the chain carries N6,N6,N6-trimethyllysine. Glycine 177 to threonine 184 provides a ligand contact to ATP. Threonine 377 carries the post-translational modification Phosphothreonine. 2 actin-binding regions span residues leucine 654 to glutamate 676 and lysine 756 to glycine 770. An IQ domain is found at leucine 780–serine 809. The stretch at leucine 839 to glutamate 1934 forms a coiled coil. A phosphoserine mark is found at serine 1136 and serine 1268. A Phosphothreonine modification is found at threonine 1281. Tyrosine 1307 is modified (phosphotyrosine). Threonine 1308 bears the Phosphothreonine mark. Serine 1509 carries the post-translational modification Phosphoserine. Threonine 1512 bears the Phosphothreonine mark. A disordered region spans residues serine 1914 to glutamate 1934. Residues lysine 1922 to glutamate 1934 are compositionally biased toward basic and acidic residues.

Belongs to the TRAFAC class myosin-kinesin ATPase superfamily. Myosin family. Muscle myosin is a hexameric protein that consists of 2 heavy chain subunits (MHC), 2 alkali light chain subunits (MLC) and 2 regulatory light chain subunits (MLC-2). Interacts with ECPAS. Interacts (via C-terminus) with LRRC39.

It localises to the cytoplasm. It is found in the myofibril. The protein resides in the sarcomere. Functionally, myosins are actin-based motor molecules with ATPase activity essential for muscle contraction. Forms regular bipolar thick filaments that, together with actin thin filaments, constitute the fundamental contractile unit of skeletal and cardiac muscle. The sequence is that of Myosin-7 (MYH7) from Mesocricetus auratus (Golden hamster).